Reading from the N-terminus, the 338-residue chain is UDP-3-O-acylglucosamine N-acyltransferase (338 aa).

His239 functions as the Proton acceptor in the catalytic mechanism.

The protein belongs to the transferase hexapeptide repeat family. LpxD subfamily. As to quaternary structure, homotrimer.

It catalyses the reaction a UDP-3-O-[(3R)-3-hydroxyacyl]-alpha-D-glucosamine + a (3R)-hydroxyacyl-[ACP] = a UDP-2-N,3-O-bis[(3R)-3-hydroxyacyl]-alpha-D-glucosamine + holo-[ACP] + H(+). It participates in bacterial outer membrane biogenesis; LPS lipid A biosynthesis. In terms of biological role, catalyzes the N-acylation of UDP-3-O-acylglucosamine using 3-hydroxyacyl-ACP as the acyl donor. Is involved in the biosynthesis of lipid A, a phosphorylated glycolipid that anchors the lipopolysaccharide to the outer membrane of the cell. This chain is UDP-3-O-acylglucosamine N-acyltransferase, found in Xylella fastidiosa (strain 9a5c).